We begin with the raw amino-acid sequence, 554 residues long: Aspartyl/glutamyl-tRNA(Asn/Gln) amidotransferase subunit B (554 aa).

The tract at residues 491 to 554 (AEQPTAPPPE…TPVSHQDAHA (64 aa)) is disordered. A compositionally biased stretch (low complexity) spans 502–540 (ESAAETPEAPPAVEDAPPEAPTEAITAEAGSAEAITAAS).

This sequence belongs to the GatB/GatE family. GatB subfamily. In terms of assembly, heterotrimer of A, B and C subunits.

It catalyses the reaction L-glutamyl-tRNA(Gln) + L-glutamine + ATP + H2O = L-glutaminyl-tRNA(Gln) + L-glutamate + ADP + phosphate + H(+). The catalysed reaction is L-aspartyl-tRNA(Asn) + L-glutamine + ATP + H2O = L-asparaginyl-tRNA(Asn) + L-glutamate + ADP + phosphate + 2 H(+). Its function is as follows. Allows the formation of correctly charged Asn-tRNA(Asn) or Gln-tRNA(Gln) through the transamidation of misacylated Asp-tRNA(Asn) or Glu-tRNA(Gln) in organisms which lack either or both of asparaginyl-tRNA or glutaminyl-tRNA synthetases. The reaction takes place in the presence of glutamine and ATP through an activated phospho-Asp-tRNA(Asn) or phospho-Glu-tRNA(Gln). The sequence is that of Aspartyl/glutamyl-tRNA(Asn/Gln) amidotransferase subunit B from Gloeobacter violaceus (strain ATCC 29082 / PCC 7421).